A 267-amino-acid chain; its full sequence is 4-hydroxy-tetrahydrodipicolinate reductase (267 aa).

Residues 10–15 (GCGGRM) and glutamate 36 contribute to the NAD(+) site. Arginine 37 serves as a coordination point for NADP(+). Residues 99-101 (GTT) and 123-126 (APNF) contribute to the NAD(+) site. The active-site Proton donor/acceptor is histidine 156. Residue histidine 157 coordinates (S)-2,3,4,5-tetrahydrodipicolinate. The active-site Proton donor is the lysine 160. 166–167 (GT) is a (S)-2,3,4,5-tetrahydrodipicolinate binding site.

It belongs to the DapB family.

It is found in the cytoplasm. It carries out the reaction (S)-2,3,4,5-tetrahydrodipicolinate + NAD(+) + H2O = (2S,4S)-4-hydroxy-2,3,4,5-tetrahydrodipicolinate + NADH + H(+). It catalyses the reaction (S)-2,3,4,5-tetrahydrodipicolinate + NADP(+) + H2O = (2S,4S)-4-hydroxy-2,3,4,5-tetrahydrodipicolinate + NADPH + H(+). The protein operates within amino-acid biosynthesis; L-lysine biosynthesis via DAP pathway; (S)-tetrahydrodipicolinate from L-aspartate: step 4/4. In terms of biological role, catalyzes the conversion of 4-hydroxy-tetrahydrodipicolinate (HTPA) to tetrahydrodipicolinate. This Laribacter hongkongensis (strain HLHK9) protein is 4-hydroxy-tetrahydrodipicolinate reductase.